The following is a 301-amino-acid chain: Acetylglutamate kinase (301 aa).

Residues 68–69 (GG), arginine 90, and asparagine 195 each bind substrate.

This sequence belongs to the acetylglutamate kinase family. ArgB subfamily.

The protein localises to the cytoplasm. It carries out the reaction N-acetyl-L-glutamate + ATP = N-acetyl-L-glutamyl 5-phosphate + ADP. The protein operates within amino-acid biosynthesis; L-arginine biosynthesis; N(2)-acetyl-L-ornithine from L-glutamate: step 2/4. Its function is as follows. Catalyzes the ATP-dependent phosphorylation of N-acetyl-L-glutamate. This chain is Acetylglutamate kinase, found in Pseudomonas paraeruginosa (strain DSM 24068 / PA7) (Pseudomonas aeruginosa (strain PA7)).